Here is a 322-residue protein sequence, read N- to C-terminus: Phosphatidylserine decarboxylase proenzyme (322 aa).

Catalysis depends on charge relay system; for autoendoproteolytic cleavage activity residues Asp90, His147, and Ser254. Residue Ser254 is the Schiff-base intermediate with substrate; via pyruvic acid; for decarboxylase activity of the active site. Residue Ser254 is modified to Pyruvic acid (Ser); by autocatalysis. The disordered stretch occupies residues 290-322 (FVTPDSEPAPLPAEEIEAEHDASPLVDDKKDQV). Over residues 308-322 (EHDASPLVDDKKDQV) the composition is skewed to basic and acidic residues.

This sequence belongs to the phosphatidylserine decarboxylase family. PSD-B subfamily. Prokaryotic type I sub-subfamily. As to quaternary structure, heterodimer of a large membrane-associated beta subunit and a small pyruvoyl-containing alpha subunit. Pyruvate serves as cofactor. In terms of processing, is synthesized initially as an inactive proenzyme. Formation of the active enzyme involves a self-maturation process in which the active site pyruvoyl group is generated from an internal serine residue via an autocatalytic post-translational modification. Two non-identical subunits are generated from the proenzyme in this reaction, and the pyruvate is formed at the N-terminus of the alpha chain, which is derived from the carboxyl end of the proenzyme. The autoendoproteolytic cleavage occurs by a canonical serine protease mechanism, in which the side chain hydroxyl group of the serine supplies its oxygen atom to form the C-terminus of the beta chain, while the remainder of the serine residue undergoes an oxidative deamination to produce ammonia and the pyruvoyl prosthetic group on the alpha chain. During this reaction, the Ser that is part of the protease active site of the proenzyme becomes the pyruvoyl prosthetic group, which constitutes an essential element of the active site of the mature decarboxylase.

It is found in the cell membrane. The enzyme catalyses a 1,2-diacyl-sn-glycero-3-phospho-L-serine + H(+) = a 1,2-diacyl-sn-glycero-3-phosphoethanolamine + CO2. It participates in phospholipid metabolism; phosphatidylethanolamine biosynthesis; phosphatidylethanolamine from CDP-diacylglycerol: step 2/2. Its function is as follows. Catalyzes the formation of phosphatidylethanolamine (PtdEtn) from phosphatidylserine (PtdSer). This chain is Phosphatidylserine decarboxylase proenzyme, found in Escherichia fergusonii (strain ATCC 35469 / DSM 13698 / CCUG 18766 / IAM 14443 / JCM 21226 / LMG 7866 / NBRC 102419 / NCTC 12128 / CDC 0568-73).